Consider the following 248-residue polypeptide: PF03932 family protein CutC (248 aa).

The protein belongs to the CutC family. As to quaternary structure, homodimer.

It is found in the cytoplasm. The chain is PF03932 family protein CutC from Shigella boydii serotype 4 (strain Sb227).